The primary structure comprises 88 residues: Small ribosomal subunit protein uS17 (88 aa).

The protein belongs to the universal ribosomal protein uS17 family. In terms of assembly, part of the 30S ribosomal subunit.

In terms of biological role, one of the primary rRNA binding proteins, it binds specifically to the 5'-end of 16S ribosomal RNA. The sequence is that of Small ribosomal subunit protein uS17 from Ruthia magnifica subsp. Calyptogena magnifica.